The chain runs to 180 residues: uncharacterized protein (180 aa).

The first 21 residues, 1 to 21 (MKQCIAFMAILALSLSAISEA), serve as a signal peptide directing secretion. Residues 23-81 (GGRGVRSSGYSRPVATKPAPAPKQTQTQQQSQQPDATFGQQNMQNTATNTPNNPNNRLA) form a disordered region. Residues 27–78 (VRSSGYSRPVATKPAPAPKQTQTQQQSQQPDATFGQQNMQNTATNTPNNPNN) show a composition bias toward low complexity.

This is an uncharacterized protein from Pasteurella multocida (strain Pm70).